We begin with the raw amino-acid sequence, 294 residues long: 1,4-dihydroxy-2-naphthoate octaprenyltransferase (294 aa).

6 consecutive transmembrane segments (helical) span residues 35–55 (SAVW…VIGV), 103–123 (AGLA…ATCI), 140–160 (GFGE…GTEY), 166–186 (VDWV…SVLV), 220–240 (LLVA…WCAV), and 272–292 (GLAM…AGSV).

It belongs to the MenA family. Type 1 subfamily.

The protein resides in the cell membrane. It carries out the reaction an all-trans-polyprenyl diphosphate + 1,4-dihydroxy-2-naphthoate + H(+) = a 2-demethylmenaquinol + CO2 + diphosphate. It participates in quinol/quinone metabolism; menaquinone biosynthesis; menaquinol from 1,4-dihydroxy-2-naphthoate: step 1/2. In terms of biological role, conversion of 1,4-dihydroxy-2-naphthoate (DHNA) to demethylmenaquinone (DMK). The polypeptide is 1,4-dihydroxy-2-naphthoate octaprenyltransferase (Mycobacterium leprae (strain TN)).